We begin with the raw amino-acid sequence, 165 residues long: MEPDAKSPTPGTTETPRELATADILRVMELLPHRYPFLLVDRIVEIDGDSSCIGIKNVTINEPQFTGHFPKVPVFPGVLLVEGMAQTAGAICCAHTLTRDTRPSRVYLMTIDKVKFRKPVVPGDTVEYHMRKLTNRRTMWWFRGEAKVAGTLVAEAEIGAMLVTE.

The active site involves histidine 68.

Belongs to the thioester dehydratase family. FabZ subfamily.

It is found in the cytoplasm. It catalyses the reaction a (3R)-hydroxyacyl-[ACP] = a (2E)-enoyl-[ACP] + H2O. Its function is as follows. Involved in unsaturated fatty acids biosynthesis. Catalyzes the dehydration of short chain beta-hydroxyacyl-ACPs and long chain saturated and unsaturated beta-hydroxyacyl-ACPs. The polypeptide is 3-hydroxyacyl-[acyl-carrier-protein] dehydratase FabZ (Methylobacterium sp. (strain 4-46)).